The chain runs to 662 residues: Interleukin-12 receptor subunit beta-1 (662 aa).

Residues 1 to 23 form the signal peptide; that stretch reads MEPLVTWVVPLLFLFLLSRQGAA. The Extracellular segment spans residues 24-545; sequence CRTSECCFQD…RFSIEVQVSD (522 aa). 5 consecutive Fibronectin type-III domains span residues 46-136, 142-234, 237-337, 338-444, and 448-542; these read GPRD…LYNS, PLGD…VPPE, PQPQ…IPAD, THTE…GNAS, and TPHH…IEVQ. Cys-52 and Cys-62 are disulfide-bonded. Asn-121 carries an N-linked (GlcNAc...) asparagine glycan. The WSXWS motif motif lies at 222–226; it reads WSKWS. Residues Asn-329, Asn-346, Asn-352, Asn-442, and Asn-456 are each glycosylated (N-linked (GlcNAc...) asparagine). A helical transmembrane segment spans residues 546-570; that stretch reads WLIFFASLGSFLSILLVGVLGYLGL. Residues 571–662 lie on the Cytoplasmic side of the membrane; sequence NRAARHLCPP…EDGDRCKAKM (92 aa). The Box 1 motif signature appears at 577–585; that stretch reads LCPPLPTPC. Basic and acidic residues predominate over residues 626-637; sequence GERTEPLEKTEL. Residues 626–648 are disordered; sequence GERTEPLEKTELPEGAPELALDT.

It belongs to the type I cytokine receptor family. Type 2 subfamily. Dimer or oligomer; disulfide-linked. Interacts with IL12RB2 to form the high affinity IL12 receptor. Heterodimer with IL23R; in presence of IL23. The heterodimer forms the IL23 receptor.

It is found in the membrane. In terms of biological role, functions as an interleukin receptor which binds interleukin-12 with low affinity and is involved in IL12 transduction. Associated with IL12RB2 it forms a functional, high affinity receptor for IL12. Also associates with IL23R to form the interleukin-23 receptor which functions in IL23 signal transduction probably through activation of the Jak-Stat signaling cascade. The polypeptide is Interleukin-12 receptor subunit beta-1 (IL12RB1) (Homo sapiens (Human)).